Consider the following 342-residue polypeptide: N-acetyl-gamma-glutamyl-phosphate reductase (342 aa).

Residue Cys149 is part of the active site.

The protein belongs to the NAGSA dehydrogenase family. Type 1 subfamily.

The protein localises to the cytoplasm. The catalysed reaction is N-acetyl-L-glutamate 5-semialdehyde + phosphate + NADP(+) = N-acetyl-L-glutamyl 5-phosphate + NADPH + H(+). It functions in the pathway amino-acid biosynthesis; L-arginine biosynthesis; N(2)-acetyl-L-ornithine from L-glutamate: step 3/4. In terms of biological role, catalyzes the NADPH-dependent reduction of N-acetyl-5-glutamyl phosphate to yield N-acetyl-L-glutamate 5-semialdehyde. In Aromatoleum aromaticum (strain DSM 19018 / LMG 30748 / EbN1) (Azoarcus sp. (strain EbN1)), this protein is N-acetyl-gamma-glutamyl-phosphate reductase.